Reading from the N-terminus, the 234-residue chain is Large ribosomal subunit protein eL6 (234 aa).

The protein belongs to the eukaryotic ribosomal protein eL6 family.

This is Large ribosomal subunit protein eL6 (RPL6) from Mesembryanthemum crystallinum (Common ice plant).